The following is a 138-amino-acid chain: ATP synthase epsilon chain (138 aa).

Belongs to the ATPase epsilon chain family. As to quaternary structure, F-type ATPases have 2 components, CF(1) - the catalytic core - and CF(0) - the membrane proton channel. CF(1) has five subunits: alpha(3), beta(3), gamma(1), delta(1), epsilon(1). CF(0) has three main subunits: a, b and c.

The protein resides in the cell inner membrane. Its function is as follows. Produces ATP from ADP in the presence of a proton gradient across the membrane. This chain is ATP synthase epsilon chain, found in Psychrobacter cryohalolentis (strain ATCC BAA-1226 / DSM 17306 / VKM B-2378 / K5).